The following is a 95-amino-acid chain: Small ribosomal subunit protein uS15 (95 aa).

It belongs to the universal ribosomal protein uS15 family. As to quaternary structure, part of the 30S ribosomal subunit. Forms a bridge to the 50S subunit in the 70S ribosome, contacting the 23S rRNA.

Functionally, one of the primary rRNA binding proteins, it binds directly to 16S rRNA where it helps nucleate assembly of the platform of the 30S subunit by binding and bridging several RNA helices of the 16S rRNA. Forms an intersubunit bridge (bridge B4) with the 23S rRNA of the 50S subunit in the ribosome. This is Small ribosomal subunit protein uS15 from Streptomyces avermitilis (strain ATCC 31267 / DSM 46492 / JCM 5070 / NBRC 14893 / NCIMB 12804 / NRRL 8165 / MA-4680).